A 73-amino-acid polypeptide reads, in one-letter code: Beta-defensin 39 (73 aa).

Positions 1–23 are cleaved as a signal peptide; the sequence is MKISCFLLLVLSLSCFQINSVSG. Intrachain disulfides connect Cys29/Cys58, Cys36/Cys51, and Cys41/Cys59.

This sequence belongs to the beta-defensin family.

It localises to the secreted. In terms of biological role, has antibacterial activity. This chain is Beta-defensin 39 (Defb39), found in Rattus norvegicus (Rat).